The sequence spans 493 residues: Tripartite motif-containing protein 5 (493 aa).

The residue at position 2 (alanine 2) is an N-acetylalanine. The segment at cysteine 15 to arginine 59 adopts an RING-type zinc-finger fold. Serine 86 bears the Phosphoserine mark. The B box-type zinc finger occupies glutamine 90 to glutamate 132. Residues cysteine 95, histidine 98, cysteine 117, and histidine 123 each coordinate Zn(2+). Residues threonine 131–glutamine 223 adopt a coiled-coil conformation. The required for interaction with GABARAP and for autophagy stretch occupies residues phenylalanine 185–asparagine 198. The 213-residue stretch at leucine 281 to serine 493 folds into the B30.2/SPRY domain.

This sequence belongs to the TRIM/RBCC family. As to quaternary structure, can form homodimers and homotrimers. In addition to lower-order dimerization, also exhibits a higher-order multimerization and both low- and high-order multimerizations are essential for its restriction activity. Interacts with BTBD1 and BTBD2. Interacts with PSMC4, PSMC5, PSMD7 and HSPA8/HSC70. Interacts (via B30.2/SPRY domain) with HSPA1A/B. Interacts with PSMC2, MAP3K7/TAK1, TAB2 and TAB3. Interacts with SQSTM1. Interacts with TRIM6 and TRIM34. Interacts with ULK1 (phosphorylated form), GABARAP, GABARAPL1, GABARAPL2, MAP1LC3A, MAP1LC3C and BECN1. In terms of processing, degraded in a proteasome-independent fashion in the absence of viral infection but in a proteasome-dependent fashion following exposure to restriction sensitive virus. Post-translationally, autoubiquitinated in a RING finger- and UBE2D2-dependent manner. Monoubiquitinated by TRIM21. Deubiquitinated by Yersinia YopJ. Ubiquitination may not lead to proteasomal degradation.

It localises to the cytoplasm. The protein resides in the nucleus. The enzyme catalyses S-ubiquitinyl-[E2 ubiquitin-conjugating enzyme]-L-cysteine + [acceptor protein]-L-lysine = [E2 ubiquitin-conjugating enzyme]-L-cysteine + N(6)-ubiquitinyl-[acceptor protein]-L-lysine.. It functions in the pathway protein modification; protein ubiquitination. Its function is as follows. Capsid-specific restriction factor that prevents infection from non-host-adapted retroviruses. Blocks viral replication early in the life cycle, after viral entry but before reverse transcription. In addition to acting as a capsid-specific restriction factor, also acts as a pattern recognition receptor that activates innate immune signaling in response to the retroviral capsid lattice. Binding to the viral capsid triggers its E3 ubiquitin ligase activity, and in concert with the heterodimeric ubiquitin conjugating enzyme complex UBE2V1-UBE2N (also known as UBC13-UEV1A complex) generates 'Lys-63'-linked polyubiquitin chains, which in turn are catalysts in the autophosphorylation of the MAP3K7/TAK1 complex (includes TAK1, TAB2, and TAB3). Activation of the MAP3K7/TAK1 complex by autophosphorylation results in the induction and expression of NF-kappa-B and MAPK-responsive inflammatory genes, thereby leading to an innate immune response in the infected cell. Plays a role in regulating autophagy through activation of autophagy regulator BECN1 by causing its dissociation from its inhibitors BCL2 and TAB2. The sequence is that of Tripartite motif-containing protein 5 (TRIM5) from Pongo abelii (Sumatran orangutan).